The primary structure comprises 218 residues: Attacin-B (218 aa).

The signal sequence occupies residues 1-17 (MQKTSILILALFAIAEA). A propeptide spanning residues 18-28 (VPTTGPIRVRR) is cleaved from the precursor.

It belongs to the attacin/sarcotoxin-2 family. Hemolymph (at protein level).

Its subcellular location is the secreted. Functionally, hemolymph antibacterial protein. This is Attacin-B (AttB) from Drosophila melanogaster (Fruit fly).